A 131-amino-acid chain; its full sequence is Histone H2B.2 (131 aa).

The segment covering 1–19 has biased composition (basic and acidic residues); that stretch reads MSAKAEKKPASKAPAEKKP. The tract at residues 1 to 38 is disordered; that stretch reads MSAKAEKKPASKAPAEKKPAAKKTAPSSDGKKRTKARK. Lysine 7 and lysine 8 each carry N6-acetyllysine; alternate. Residues lysine 7 and lysine 8 each participate in a glycyl lysine isopeptide (Lys-Gly) (interchain with G-Cter in SUMO); alternate cross-link. Serine 11 bears the Phosphoserine mark. Lysine 12 bears the N6-acetyllysine mark. At lysine 17 the chain carries N6-acetyllysine; alternate. Lysine 17 is covalently cross-linked (Glycyl lysine isopeptide (Lys-Gly) (interchain with G-Cter in SUMO); alternate). Residue lysine 18 forms a Glycyl lysine isopeptide (Lys-Gly) (interchain with G-Cter in SUMO) linkage. Lysine 124 participates in a covalent cross-link: Glycyl lysine isopeptide (Lys-Gly) (interchain with G-Cter in ubiquitin).

The protein belongs to the histone H2B family. The nucleosome is a histone octamer containing two molecules each of H2A, H2B, H3 and H4 assembled in one H3-H4 heterotetramer and two H2A-H2B heterodimers. The octamer wraps approximately 147 bp of DNA. Post-translationally, monoubiquitinated by the UBC2-BRE1 complex to form H2BK123ub1. H2BK123ub1 gives a specific tag for epigenetic transcriptional activation and is also prerequisite for H3K4me and H3K79me formation. H2BK123ub1 also modulates the formation of double-strand breaks during meiosis and is a prerequisite for DNA-damage checkpoint activation. In terms of processing, phosphorylated by STE20 to form H2BS10ph during progression through meiotic prophase. May be correlated with chromosome condensation. Acetylated by GCN5 to form H2BK11ac and H2BK16ac. H2BK16ac can also be formed by ESA1. Acetylation of N-terminal lysines and particularly formation of H2BK11acK16ac has a positive effect on transcription. Post-translationally, sumoylation to form H2BK6su or H2BK7su, and probably also H2BK16su or H2BK17su, occurs preferentially near the telomeres and represses gene transcription.

The protein resides in the nucleus. It localises to the chromosome. Its function is as follows. Core component of nucleosome. Nucleosomes wrap and compact DNA into chromatin, limiting DNA accessibility to the cellular machineries which require DNA as a template. Histones thereby play a central role in transcription regulation, DNA repair, DNA replication and chromosomal stability. DNA accessibility is regulated via a complex set of post-translational modifications of histones, also called histone code, and nucleosome remodeling. This Candida glabrata (strain ATCC 2001 / BCRC 20586 / JCM 3761 / NBRC 0622 / NRRL Y-65 / CBS 138) (Yeast) protein is Histone H2B.2 (HTB2).